Consider the following 267-residue polypeptide: Hydroxynaphthalene reductase-like protein Arp2 (267 aa).

NADP(+) is bound by residues Ile-25, Asn-45, Asp-71, and Asn-98. Residues Ser-147 and Ser-148 each act as proton donor in the active site. 4 residues coordinate NADP(+): Tyr-162, Lys-166, Val-195, and Thr-197. Tyr-162 acts as the Proton acceptor in catalysis. Lys-166 (lowers pKa of active site Tyr) is an active-site residue.

It belongs to the short-chain dehydrogenases/reductases (SDR) family.

Its function is as follows. Hydroxynaphthalene reductase-like protein; part of the Pks2 gene cluster that mediates the formation of infectious structures (appressoria), enabling these fungi to kill insects faster. The product of the Pks2 gene cluster is different from the one of Pks1 and has still not been identified. The chain is Hydroxynaphthalene reductase-like protein Arp2 from Metarhizium majus (strain ARSEF 297).